Reading from the N-terminus, the 853-residue chain is DNA mismatch repair protein MutS (853 aa).

An ATP-binding site is contributed by Gly616–Ser623.

It belongs to the DNA mismatch repair MutS family.

In terms of biological role, this protein is involved in the repair of mismatches in DNA. It is possible that it carries out the mismatch recognition step. This protein has a weak ATPase activity. The protein is DNA mismatch repair protein MutS of Erwinia tasmaniensis (strain DSM 17950 / CFBP 7177 / CIP 109463 / NCPPB 4357 / Et1/99).